We begin with the raw amino-acid sequence, 750 residues long: GTP pyrophosphokinase rsh (750 aa).

In terms of domain architecture, HD spans 45–144 (YFSHPLEVAA…VKLADRLHNM (100 aa)). In terms of domain architecture, TGS spans 390–451 (DQVFCFTPKG…KNGDEVDIIR (62 aa)). A disordered region spans residues 587–613 (AAKVDPAATTPKPGKRALPIRGTNPDL). Residues 676–750 (RISVSAINSP…SVSSAKRVNG (75 aa)) enclose the ACT domain.

It belongs to the RelA/SpoT family.

The enzyme catalyses GTP + ATP = guanosine 3'-diphosphate 5'-triphosphate + AMP. In terms of biological role, functions as a (p)ppGpp synthase. In eubacteria ppGpp (guanosine 3'-diphosphate 5'-diphosphate) is a mediator of the stringent response that coordinates a variety of cellular activities in response to changes in nutritional abundance. It is necessary for persistence in mice, essential for intracellular growth of Brucella and required for expression of the type IV secretion system VirB and therefore plays a role in adaptation of Brucella to its intracellular host environment. This Brucella suis biovar 1 (strain 1330) protein is GTP pyrophosphokinase rsh (rsh).